The sequence spans 305 residues: Glycine--tRNA ligase alpha subunit (305 aa).

Belongs to the class-II aminoacyl-tRNA synthetase family. Tetramer of two alpha and two beta subunits.

The protein localises to the cytoplasm. The catalysed reaction is tRNA(Gly) + glycine + ATP = glycyl-tRNA(Gly) + AMP + diphosphate. This chain is Glycine--tRNA ligase alpha subunit, found in Streptococcus pneumoniae serotype 19F (strain G54).